Here is a 557-residue protein sequence, read N- to C-terminus: Probable asparagine synthetase [glutamine-hydrolyzing] (557 aa).

Residue C2 is the For GATase activity of the active site. In terms of domain architecture, Glutamine amidotransferase type-2 spans 2–188 (CGILAILNSL…PGHYFSSKTK (187 aa)). Residues 50–54 (RLAIV), 75–77 (NGE), and D101 contribute to the L-glutamine site. Residues 217 to 466 (AIKEAFEQAV…LPSSVLWRQK (250 aa)) form the Asparagine synthetase domain. Residues L239, I279, and 353-354 (SG) each bind ATP. The interval 538 to 557 (WGASQDPSGRAQKVHLSTTE) is disordered.

The catalysed reaction is L-aspartate + L-glutamine + ATP + H2O = L-asparagine + L-glutamate + AMP + diphosphate + H(+). It participates in amino-acid biosynthesis; L-asparagine biosynthesis; L-asparagine from L-aspartate (L-Gln route): step 1/1. This is Probable asparagine synthetase [glutamine-hydrolyzing] (asns) from Dictyostelium discoideum (Social amoeba).